The following is a 245-amino-acid chain: Balbiani ring A 28 kDa protein (245 aa).

The N-terminal stretch at 1–16 is a signal peptide; the sequence is MKSIIKHILFVVLLIS. Residues serine 33, serine 40, serine 92, serine 93, and serine 115 each carry the phosphoserine modification.

In terms of tissue distribution, salivary gland.

The protein resides in the secreted. Functionally, used by the larvae to construct a supramolecular structure, the larval tube. In Chironomus thummi thummi (Midge), this protein is Balbiani ring A 28 kDa protein.